Consider the following 240-residue polypeptide: Probable transcriptional regulatory protein A2cp1_1765 (240 aa).

Belongs to the TACO1 family.

The protein resides in the cytoplasm. In Anaeromyxobacter dehalogenans (strain 2CP-1 / ATCC BAA-258), this protein is Probable transcriptional regulatory protein A2cp1_1765.